A 155-amino-acid chain; its full sequence is Small ribosomal subunit protein eS19 (155 aa).

Belongs to the eukaryotic ribosomal protein eS19 family. Component of the small ribosomal subunit.

Its subcellular location is the cytoplasm. Component of the small ribosomal subunit. The ribosome is a large ribonucleoprotein complex responsible for the synthesis of proteins in the cell. Required for proper maturation of the small (40S) ribosomal subunit. The protein is Small ribosomal subunit protein eS19 (RPS19) of Entamoeba histolytica (strain ATCC 30459 / HM-1:IMSS / ABRM).